Here is a 160-residue protein sequence, read N- to C-terminus: Large ribosomal subunit protein uL22c (160 aa).

This sequence belongs to the universal ribosomal protein uL22 family. Part of the 50S ribosomal subunit.

The protein localises to the plastid. Its subcellular location is the chloroplast. In terms of biological role, this protein binds specifically to 23S rRNA. Functionally, the globular domain of the protein is located near the polypeptide exit tunnel on the outside of the subunit, while an extended beta-hairpin is found that lines the wall of the exit tunnel in the center of the 70S ribosome. This is Large ribosomal subunit protein uL22c (rpl22) from Arabidopsis thaliana (Mouse-ear cress).